A 350-amino-acid polypeptide reads, in one-letter code: Phenylalanine--tRNA ligase alpha subunit (350 aa).

Residue glutamate 271 participates in Mg(2+) binding.

Belongs to the class-II aminoacyl-tRNA synthetase family. Phe-tRNA synthetase alpha subunit type 1 subfamily. As to quaternary structure, tetramer of two alpha and two beta subunits. Mg(2+) serves as cofactor.

The protein resides in the cytoplasm. It carries out the reaction tRNA(Phe) + L-phenylalanine + ATP = L-phenylalanyl-tRNA(Phe) + AMP + diphosphate + H(+). This chain is Phenylalanine--tRNA ligase alpha subunit, found in Verminephrobacter eiseniae (strain EF01-2).